The following is a 516-amino-acid chain: MAKNLEDFDKIIVLDFGSQYNQLITRRIRDFGIYSELLPHDLSIEKIKEMNPKGIIFSGGPNSVYDDGALKVDPEIFKLGIPILGICYGMQLMSYDLGGKVERAENKEYGRANITVEDPDSALFKGLPTKQYVWMSHGDLVTQAPEGFEVTASSKNCPIAAIANPDKKFYGIQFHAEVRNSEYGLDILKHFAFDVCGAVANWTMADFIDMQVDEIRKEVGDKKVILGLSGGVDSSVTATLLHKAIGDQLTAIFVDHGMLRKDEGDQVMKALNKDLGVNIIRVNAQERFLNKLKGVTDPEQKRKIIGKEFIEVFNEEAKKLKDVDFLAQGTLYTDVIESGTNTAQTIKSHHNVGGLPEDMNFKLIEPLRKLFKDEVRELGEKLGIPHDLVWRQPFPGPGLGIRVLGEVTEDKLKIVRESDAILREEIKKAGLQEKIWQYFTVLPGIRSVGVMGDGRTYDYTIGIRAVTSIDGMTADFAQIPWDVLGHISDRIVNEVDNVNRIVYDVTSKPPSTIEWE.

The Glutamine amidotransferase type-1 domain maps to 10 to 201 (KIIVLDFGSQ…AFDVCGAVAN (192 aa)). Cys-87 serves as the catalytic Nucleophile. Active-site residues include His-175 and Glu-177. Positions 202–391 (WTMADFIDMQ…LGIPHDLVWR (190 aa)) constitute a GMPS ATP-PPase domain. 229–235 (SGGVDSS) is an ATP binding site.

In terms of assembly, homodimer.

The catalysed reaction is XMP + L-glutamine + ATP + H2O = GMP + L-glutamate + AMP + diphosphate + 2 H(+). It participates in purine metabolism; GMP biosynthesis; GMP from XMP (L-Gln route): step 1/1. Its function is as follows. Catalyzes the synthesis of GMP from XMP. The protein is GMP synthase [glutamine-hydrolyzing] of Lactobacillus acidophilus (strain ATCC 700396 / NCK56 / N2 / NCFM).